Here is a 600-residue protein sequence, read N- to C-terminus: Mitoguardin 1 (600 aa).

Helical transmembrane passes span 15–32 and 38–58; these read TYAV…YSLS and PVAK…IFLA. Phosphoserine is present on residues S257 and S261.

It belongs to the mitoguardin family. Homodimer and heterodimer; forms heterodimers with MIGA2. Interacts with PLD6/MitoPLD.

Its subcellular location is the mitochondrion outer membrane. Its function is as follows. Regulator of mitochondrial fusion. Acts by forming homo- and heterodimers at the mitochondrial outer membrane and facilitating the formation of PLD6/MitoPLD dimers. May act by regulating phospholipid metabolism via PLD6/MitoPLD. The chain is Mitoguardin 1 from Mus musculus (Mouse).